A 494-amino-acid polypeptide reads, in one-letter code: UDP-N-acetylmuramoyl-L-alanyl-D-glutamate--L-lysine ligase (494 aa).

Residue serine 30 participates in UDP-N-acetyl-alpha-D-muramoyl-L-alanyl-D-glutamate binding. 110-116 (GTNGKTS) lines the ATP pocket. Residues 152-153 (TT), serine 179, and arginine 187 contribute to the UDP-N-acetyl-alpha-D-muramoyl-L-alanyl-D-glutamate site. Residue lysine 219 is modified to N6-carboxylysine. The short motif at 406 to 409 (DNPA) is the L-lysine recognition motif element.

It belongs to the MurCDEF family. MurE subfamily. Post-translationally, carboxylation is probably crucial for Mg(2+) binding and, consequently, for the gamma-phosphate positioning of ATP.

The protein resides in the cytoplasm. The enzyme catalyses UDP-N-acetyl-alpha-D-muramoyl-L-alanyl-D-glutamate + L-lysine + ATP = UDP-N-acetyl-alpha-D-muramoyl-L-alanyl-gamma-D-glutamyl-L-lysine + ADP + phosphate + H(+). It functions in the pathway cell wall biogenesis; peptidoglycan biosynthesis. Catalyzes the addition of L-lysine to the nucleotide precursor UDP-N-acetylmuramoyl-L-alanyl-D-glutamate (UMAG) in the biosynthesis of bacterial cell-wall peptidoglycan. The sequence is that of UDP-N-acetylmuramoyl-L-alanyl-D-glutamate--L-lysine ligase from Staphylococcus haemolyticus (strain JCSC1435).